The primary structure comprises 359 residues: Threonine dehydratase biosynthetic, chloroplastic (359 aa).

2 ACT-like domains span residues 184–256 (ALLA…NFSH) and 278–349 (IFGE…LDNS).

Belongs to the serine/threonine dehydratase family. Homotetramer. It depends on pyridoxal 5'-phosphate as a cofactor. As to expression, floral buds of untreated plants. After ABA treatment or mechanical wounding is mostly accumulated in leaves, to a lesser extent in stems, but not in roots. Expressed in anthers, carpel leaves, pith cells, sepals and petals. Not expressed in stomium, vascular bundles, epidermal cells or pollen mother cells.

The protein resides in the plastid. The protein localises to the chloroplast. The enzyme catalyses L-threonine = 2-oxobutanoate + NH4(+). It participates in amino-acid biosynthesis; L-isoleucine biosynthesis; 2-oxobutanoate from L-threonine: step 1/1. The protein is Threonine dehydratase biosynthetic, chloroplastic of Solanum tuberosum (Potato).